The primary structure comprises 89 residues: Small ribosomal subunit protein uS15 (89 aa).

The protein belongs to the universal ribosomal protein uS15 family. Part of the 30S ribosomal subunit. Forms a bridge to the 50S subunit in the 70S ribosome, contacting the 23S rRNA.

In terms of biological role, one of the primary rRNA binding proteins, it binds directly to 16S rRNA where it helps nucleate assembly of the platform of the 30S subunit by binding and bridging several RNA helices of the 16S rRNA. Forms an intersubunit bridge (bridge B4) with the 23S rRNA of the 50S subunit in the ribosome. This chain is Small ribosomal subunit protein uS15, found in Saccharopolyspora erythraea (strain ATCC 11635 / DSM 40517 / JCM 4748 / NBRC 13426 / NCIMB 8594 / NRRL 2338).